A 418-amino-acid chain; its full sequence is Gamma-glutamyl phosphate reductase (418 aa).

Belongs to the gamma-glutamyl phosphate reductase family.

It is found in the cytoplasm. The enzyme catalyses L-glutamate 5-semialdehyde + phosphate + NADP(+) = L-glutamyl 5-phosphate + NADPH + H(+). The protein operates within amino-acid biosynthesis; L-proline biosynthesis; L-glutamate 5-semialdehyde from L-glutamate: step 2/2. Its function is as follows. Catalyzes the NADPH-dependent reduction of L-glutamate 5-phosphate into L-glutamate 5-semialdehyde and phosphate. The product spontaneously undergoes cyclization to form 1-pyrroline-5-carboxylate. The chain is Gamma-glutamyl phosphate reductase from Dechloromonas aromatica (strain RCB).